The following is a 287-amino-acid chain: Putative sugar uptake protein spyM18_2243 (287 aa).

The next 10 helical transmembrane spans lie at Ile-4–Gly-26, Leu-33–Val-50, Thr-55–Gly-72, Val-85–Val-107, Phe-117–Ser-134, Phe-154–Phe-171, Ser-181–Phe-200, Tyr-207–Ala-229, Leu-234–Leu-256, and Val-268–Val-285.

Belongs to the GRP transporter (TC 2.A.7.5) family.

It localises to the cell membrane. The polypeptide is Putative sugar uptake protein spyM18_2243 (Streptococcus pyogenes serotype M18 (strain MGAS8232)).